The primary structure comprises 165 residues: MIDADGYRPNVGIIIVNKEGKLFWGKRLYQDAWQFPQGGVRENETPQQAVFRELKEEVGLEPSDVRVLGRTKDWLTYDLPKHLIRHYSQPVCIGQKQIWFLLGMLSDDEKINLNTHETPEFEGWSWVDYWVPVQNVVEFKQSVYHQALTELETHLHKFWTKEHVG.

Residues 6–149 form the Nudix hydrolase domain; sequence GYRPNVGIII…KQSVYHQALT (144 aa). The Nudix box motif lies at 38–59; that stretch reads GGVRENETPQQAVFRELKEEVG.

It belongs to the Nudix hydrolase family. RppH subfamily. It depends on a divalent metal cation as a cofactor.

In terms of biological role, accelerates the degradation of transcripts by removing pyrophosphate from the 5'-end of triphosphorylated RNA, leading to a more labile monophosphorylated state that can stimulate subsequent ribonuclease cleavage. The chain is RNA pyrophosphohydrolase from Hydrogenovibrio crunogenus (strain DSM 25203 / XCL-2) (Thiomicrospira crunogena).